The sequence spans 335 residues: UPF0353 protein MLBr01808 (335 aa).

2 helical membrane-spanning segments follow: residues 18-38 (WFFLFIFIVFGLAAFYVMMQV) and 67-87 (VPAILLMLALLLFTIAMAGPT). One can recognise a VWFA domain in the interval 98–294 (VVMLVIDVSQ…AELKAVYASL (197 aa)). A helical membrane pass occupies residues 309 to 329 (AGWLRLGVLVLALAALTALLI).

It belongs to the UPF0353 family.

It localises to the cell membrane. This is UPF0353 protein MLBr01808 from Mycobacterium leprae (strain Br4923).